A 235-amino-acid polypeptide reads, in one-letter code: Small ribosomal subunit protein uS3 (235 aa).

A KH type-2 domain is found at 39-107; sequence IRDFIKKECH…ELHLNIVEVR (69 aa). The disordered stretch occupies residues 213–235; that stretch reads AARDRKAQELQDGPAPRGAGGRR.

Belongs to the universal ribosomal protein uS3 family. Part of the 30S ribosomal subunit. Forms a tight complex with proteins S10 and S14.

Functionally, binds the lower part of the 30S subunit head. Binds mRNA in the 70S ribosome, positioning it for translation. The polypeptide is Small ribosomal subunit protein uS3 (Roseobacter denitrificans (strain ATCC 33942 / OCh 114) (Erythrobacter sp. (strain OCh 114))).